Reading from the N-terminus, the 493-residue chain is Transcript termination protein A18 (493 aa).

Positions 100–256 (MIESKRPLYI…NSIINIAKLS (157 aa)) constitute a Helicase ATP-binding domain. Residue 113–120 (LACGFGKT) coordinates ATP. The short motif at 206-209 (DESH) is the DESH box element.

Belongs to the helicase family. Poxviruses subfamily. In terms of assembly, interacts with G2. Might be part of a transcription complex composed at least of G2, A18, and H5.

It is found in the virion. Its function is as follows. DNA helicase which seems to act as a postreplicative transcription termination factor. Involved in ATP-dependent release of nascent RNA. Forms a stable complex with single-stranded DNA, and to a lesser extent RNA. The protein is Transcript termination protein A18 of Vaccinia virus (strain Tian Tan) (VACV).